Reading from the N-terminus, the 302-residue chain is Ribosomal RNA small subunit methyltransferase A (302 aa).

6 residues coordinate S-adenosyl-L-methionine: histidine 15, leucine 17, glycine 42, glutamate 64, aspartate 89, and asparagine 109. Residues 275-302 (DAASADGHDHGDGSGQGESSPGGARDQI) are disordered.

The protein belongs to the class I-like SAM-binding methyltransferase superfamily. rRNA adenine N(6)-methyltransferase family. RsmA subfamily.

The protein localises to the cytoplasm. The catalysed reaction is adenosine(1518)/adenosine(1519) in 16S rRNA + 4 S-adenosyl-L-methionine = N(6)-dimethyladenosine(1518)/N(6)-dimethyladenosine(1519) in 16S rRNA + 4 S-adenosyl-L-homocysteine + 4 H(+). In terms of biological role, specifically dimethylates two adjacent adenosines (A1518 and A1519) in the loop of a conserved hairpin near the 3'-end of 16S rRNA in the 30S particle. May play a critical role in biogenesis of 30S subunits. This is Ribosomal RNA small subunit methyltransferase A from Parasynechococcus marenigrum (strain WH8102).